The primary structure comprises 153 residues: 6,7-dimethyl-8-ribityllumazine synthase (153 aa).

5-amino-6-(D-ribitylamino)uracil contacts are provided by residues F21, 55–57, and 79–81; these read AFE and TVI. 84 to 85 is a (2S)-2-hydroxy-3-oxobutyl phosphate binding site; that stretch reads AT. H87 acts as the Proton donor in catalysis. F112 serves as a coordination point for 5-amino-6-(D-ribitylamino)uracil. Residue R126 participates in (2S)-2-hydroxy-3-oxobutyl phosphate binding.

Belongs to the DMRL synthase family. As to quaternary structure, forms an icosahedral capsid composed of 60 subunits, arranged as a dodecamer of pentamers.

The catalysed reaction is (2S)-2-hydroxy-3-oxobutyl phosphate + 5-amino-6-(D-ribitylamino)uracil = 6,7-dimethyl-8-(1-D-ribityl)lumazine + phosphate + 2 H2O + H(+). It participates in cofactor biosynthesis; riboflavin biosynthesis; riboflavin from 2-hydroxy-3-oxobutyl phosphate and 5-amino-6-(D-ribitylamino)uracil: step 1/2. Its function is as follows. Catalyzes the formation of 6,7-dimethyl-8-ribityllumazine by condensation of 5-amino-6-(D-ribitylamino)uracil with 3,4-dihydroxy-2-butanone 4-phosphate. This is the penultimate step in the biosynthesis of riboflavin. The polypeptide is 6,7-dimethyl-8-ribityllumazine synthase (Bacillus cereus (strain ATCC 10987 / NRS 248)).